The following is a 559-amino-acid chain: Formate--tetrahydrofolate ligase (559 aa).

Residue 68-75 (TPAGEGKT) coordinates ATP.

Belongs to the formate--tetrahydrofolate ligase family.

It carries out the reaction (6S)-5,6,7,8-tetrahydrofolate + formate + ATP = (6R)-10-formyltetrahydrofolate + ADP + phosphate. It participates in one-carbon metabolism; tetrahydrofolate interconversion. The polypeptide is Formate--tetrahydrofolate ligase (Sinorhizobium fredii (strain NBRC 101917 / NGR234)).